The sequence spans 492 residues: Cytochrome P450 2B19 (492 aa).

S129 is modified (phosphoserine; by PKA). C437 provides a ligand contact to heme.

The protein belongs to the cytochrome P450 family. Heme serves as cofactor. Expressed only in differentiated keratinocytes in skin.

It localises to the endoplasmic reticulum membrane. The protein resides in the microsome membrane. The catalysed reaction is an organic molecule + reduced [NADPH--hemoprotein reductase] + O2 = an alcohol + oxidized [NADPH--hemoprotein reductase] + H2O + H(+). Functionally, cytochromes P450 are a group of heme-thiolate monooxygenases. In liver microsomes, this enzyme is involved in an NADPH-dependent electron transport pathway. It oxidizes a variety of structurally unrelated compounds, including steroids, fatty acids, and xenobiotics. In Mus musculus (Mouse), this protein is Cytochrome P450 2B19 (Cyp2b19).